Consider the following 409-residue polypeptide: Na(+)/H(+) antiporter NhaA 2 (409 aa).

The next 12 membrane-spanning stretches (helical) occupy residues 10–30 (VAAG…NTPA), 60–80 (GLLV…FLAG), 89–109 (LVPA…YLAI), 118–138 (GWPV…AVFG), 148–168 (FLLA…AVFF), 171–191 (GLDL…AVVG), 203–223 (IAVV…TLSS), 224–244 (GIHA…LSGL), 257–277 (IVLP…IGLA), 283–303 (FWGI…AGGL), 328–348 (LLGG…FAGL), and 356–376 (TLAV…TLSI). The segment at 384–409 (AGAAADDDDATRDDFPAHADGGPARA) is disordered.

The protein belongs to the NhaA Na(+)/H(+) (TC 2.A.33) antiporter family.

The protein localises to the cell membrane. The enzyme catalyses Na(+)(in) + 2 H(+)(out) = Na(+)(out) + 2 H(+)(in). Na(+)/H(+) antiporter that extrudes sodium in exchange for external protons. In Clavibacter michiganensis subsp. michiganensis (strain NCPPB 382), this protein is Na(+)/H(+) antiporter NhaA 2.